Reading from the N-terminus, the 148-residue chain is Protein E6 (148 aa).

Zinc fingers lie at residues 31 to 67 and 104 to 140; these read CVYC…CQPC and CGKC…CTQC. The PDZ-binding domain signature appears at 146–148; that stretch reads TVV.

This sequence belongs to the papillomaviridae E6 protein family. Forms homodimers. Interacts with ubiquitin-protein ligase UBE3A/E6-AP and thus forms a complex with human TP53. Interacts with human NFX1 and MAGI3. Interacts with human IRF3; this interaction inhibits the establishment of antiviral state. Interacts with human TYK2; this interaction inhibits JAK-STAT activation by interferon alpha. Interacts with host DLG1; this interaction leads to the proteasomal degradation of DLG1.

It localises to the host cytoplasm. It is found in the host nucleus. Functionally, plays a major role in the induction and maintenance of cellular transformation. Acts mainly as an oncoprotein by stimulating the destruction of many host cell key regulatory proteins. E6 associates with host UBE3A/E6-AP ubiquitin-protein ligase, and inactivates tumor suppressors TP53 and TP73 by targeting them to the 26S proteasome for degradation. In turn, DNA damage and chromosomal instabilities increase and lead to cell proliferation and cancer development. The complex E6/E6AP targets several other substrates to degradation via the proteasome including host DLG1 or NFX1, a repressor of human telomerase reverse transcriptase (hTERT). The resulting increased expression of hTERT prevents the shortening of telomere length leading to cell immortalization. Other cellular targets including BAK1, Fas-associated death domain-containing protein (FADD) and procaspase 8, are degraded by E6/E6AP causing inhibition of apoptosis. E6 also inhibits immune response by interacting with host IRF3 and TYK2. These interactions prevent IRF3 transcriptional activities and inhibit TYK2-mediated JAK-STAT activation by interferon alpha resulting in inhibition of the interferon signaling pathway. The protein is Protein E6 of Homo sapiens (Human).